Consider the following 441-residue polypeptide: ATP-dependent protease ATPase subunit HslU (441 aa).

Residues I18, 60–65, D254, E319, and R391 each bind ATP; that span reads GVGKTE.

Belongs to the ClpX chaperone family. HslU subfamily. In terms of assembly, a double ring-shaped homohexamer of HslV is capped on each side by a ring-shaped HslU homohexamer. The assembly of the HslU/HslV complex is dependent on binding of ATP.

The protein localises to the cytoplasm. Functionally, ATPase subunit of a proteasome-like degradation complex; this subunit has chaperone activity. The binding of ATP and its subsequent hydrolysis by HslU are essential for unfolding of protein substrates subsequently hydrolyzed by HslV. HslU recognizes the N-terminal part of its protein substrates and unfolds these before they are guided to HslV for hydrolysis. The sequence is that of ATP-dependent protease ATPase subunit HslU from Shewanella denitrificans (strain OS217 / ATCC BAA-1090 / DSM 15013).